Reading from the N-terminus, the 420-residue chain is Phosphoribosylamine--glycine ligase (420 aa).

The 207-residue stretch at 108–314 (KQFMEKYAIP…FAALIDALLH (207 aa)) folds into the ATP-grasp domain. 134 to 195 (LDERGVPIVI…EDFLAGEEFS (62 aa)) serves as a coordination point for ATP. 2 residues coordinate Mg(2+): E284 and N286.

It belongs to the GARS family. It depends on Mg(2+) as a cofactor. Mn(2+) serves as cofactor.

The enzyme catalyses 5-phospho-beta-D-ribosylamine + glycine + ATP = N(1)-(5-phospho-beta-D-ribosyl)glycinamide + ADP + phosphate + H(+). It functions in the pathway purine metabolism; IMP biosynthesis via de novo pathway; N(1)-(5-phospho-D-ribosyl)glycinamide from 5-phospho-alpha-D-ribose 1-diphosphate: step 2/2. The sequence is that of Phosphoribosylamine--glycine ligase from Listeria monocytogenes serotype 4b (strain F2365).